Reading from the N-terminus, the 196-residue chain is Peptidyl-tRNA hydrolase (196 aa).

Residue Tyr14 participates in tRNA binding. His19 acts as the Proton acceptor in catalysis. Residues Phe64, Asn66, and Asn112 each contribute to the tRNA site.

It belongs to the PTH family. In terms of assembly, monomer.

Its subcellular location is the cytoplasm. It catalyses the reaction an N-acyl-L-alpha-aminoacyl-tRNA + H2O = an N-acyl-L-amino acid + a tRNA + H(+). Hydrolyzes ribosome-free peptidyl-tRNAs (with 1 or more amino acids incorporated), which drop off the ribosome during protein synthesis, or as a result of ribosome stalling. Functionally, catalyzes the release of premature peptidyl moieties from peptidyl-tRNA molecules trapped in stalled 50S ribosomal subunits, and thus maintains levels of free tRNAs and 50S ribosomes. This Solibacter usitatus (strain Ellin6076) protein is Peptidyl-tRNA hydrolase.